The chain runs to 263 residues: Cell division protein DivIB (263 aa).

At 1–32 (MNPGQDREKIVNIEERIPKIKEQRKQKANRRL) the chain is on the cytoplasmic side. A helical membrane pass occupies residues 33-53 (ISFIMLFFIMVLIIVYLQTPI). Positions 51-123 (TPISKVSTIS…NKINIAIEEY (73 aa)) are alpha. In terms of domain architecture, POTRA spans 54–123 (SKVSTISVTG…NKINIAIEEY (70 aa)). Over 54-263 (SKVSTISVTG…DKAAKKEDEN (210 aa)) the chain is Extracellular. Positions 124–251 (KAIAYLEKDD…EVATYFEEFG (128 aa)) are beta. A gamma region spans residues 229–263 (SQLSSNKKGIIHLEVATYFEEFGKNDKAAKKEDEN).

It belongs to the FtsQ/DivIB family. DivIB subfamily. In terms of assembly, interacts with FtsL, DivIC and PBP-2B.

It localises to the cell membrane. In terms of biological role, cell division protein that may be involved in stabilizing or promoting the assembly of the division complex. Plays an essential role in division at high temperatures, maybe by protecting FtsL from degradation or by promoting formation of the FtsL-DivIC complex. May modulate the transpeptidase activity of PBP-2B. Also required for efficient sporulation at all temperatures. Could be directly involved in the engulfment process or be required to form a sporulation septum competent for engulfment. Influences the Spo0J/Soj system of chromosome segregation. The chain is Cell division protein DivIB from Bacillus subtilis (strain 168).